We begin with the raw amino-acid sequence, 1062 residues long: Isoleucine--tRNA ligase (1062 aa).

Positions 47-57 (PYTTGHIHLGT) match the 'HIGH' region motif. A 'KMSKS' region motif is present at residues 591-595 (KMSKS). Lysine 594 is an ATP binding site.

Belongs to the class-I aminoacyl-tRNA synthetase family. IleS type 2 subfamily. As to quaternary structure, monomer. The cofactor is Zn(2+).

Its subcellular location is the cytoplasm. The catalysed reaction is tRNA(Ile) + L-isoleucine + ATP = L-isoleucyl-tRNA(Ile) + AMP + diphosphate. Its function is as follows. Catalyzes the attachment of isoleucine to tRNA(Ile). As IleRS can inadvertently accommodate and process structurally similar amino acids such as valine, to avoid such errors it has two additional distinct tRNA(Ile)-dependent editing activities. One activity is designated as 'pretransfer' editing and involves the hydrolysis of activated Val-AMP. The other activity is designated 'posttransfer' editing and involves deacylation of mischarged Val-tRNA(Ile). The sequence is that of Isoleucine--tRNA ligase from Methanospirillum hungatei JF-1 (strain ATCC 27890 / DSM 864 / NBRC 100397 / JF-1).